Reading from the N-terminus, the 190-residue chain is Glutamyl-tRNA(Gln) amidotransferase subunit C, mitochondrial (190 aa).

Residues 1–96 (MISFQIILQQ…VLNLKQAVRF (96 aa)) constitute a mitochondrion transit peptide. Residues 28 to 57 (KSNSTAVGSSDEDDEIYVPKKPIPSPIDQS) are disordered.

The protein belongs to the GatC family. Subunit of the heterotrimeric GatCAB amidotransferase (AdT) complex, composed of A, B and C subunits.

The protein localises to the mitochondrion. It carries out the reaction L-glutamyl-tRNA(Gln) + L-glutamine + ATP + H2O = L-glutaminyl-tRNA(Gln) + L-glutamate + ADP + phosphate + H(+). Allows the formation of correctly charged Gln-tRNA(Gln) through the transamidation of misacylated Glu-tRNA(Gln) in the mitochondria. The reaction takes place in the presence of glutamine and ATP through an activated gamma-phospho-Glu-tRNA(Gln). The chain is Glutamyl-tRNA(Gln) amidotransferase subunit C, mitochondrial from Loa loa (Eye worm).